We begin with the raw amino-acid sequence, 79 residues long: Hematopoietic cell signal transducer (79 aa).

Residues 1–17 (MDPPGYLLFLLLLPVAA) form the signal peptide. At 18–35 (SQTSAGSCSGCGTLSLPL) the chain is on the extracellular side. The helical transmembrane segment at 36–56 (LAGLVAADAVMSLLIVGVVFV) threads the bilayer. Topologically, residues 57–79 (CMRPHGRPAQEDGRVYINMPGRG) are cytoplasmic. Y72 carries the phosphotyrosine modification. The interval 72 to 74 (YIN) is GRB2 binding site. Residues 72–75 (YINM) are PIK3R1 binding site.

Belongs to the DAP10 family. Homodimer; Disulfide-linked. Interacts with KLRK1 to form a stable complex, which results in surface expression of both proteins, whereas alone, it is minimally expressed. Interacts with PIK3R1 and GRB2. Interacts with CLEC5A. Forms an CLEC5A/TYROBP/HCST trimolecular complex depending almost solely on TYROBP. Heterohexamer composed of four subunits of HCST/DAP10 and two subunits of KLRK1. Interacts (via transmembrane domain) with KLRK1 isoform 1 (via transmembrane domain); the interaction is required for KLRK1 cell surface expression on naive NK cells and activated CD8(+) T-cells, but is dispensable on activated TYROBP-expressing NK cells. Interacts (via transmembrane domain) with KLRK1 isoform 2 (via transmembrane domain); the interaction is required for KLRK1 NK cell surface expression and induces NK cell-mediated cytotoxicity. Interacts with CD300H. Post-translationally, phosphorylated; PIK3R1 and GRB2 associate specifically with tyrosine-phosphorylated HCST. O-glycosylated.

It is found in the membrane. Transmembrane adapter protein which associates with KLRK1 to form an activation receptor KLRK1-HCST in lymphoid and myeloid cells; this receptor plays a major role in triggering cytotoxicity against target cells expressing cell surface ligands such as MHC class I chain-related MICA and MICB, and UL16-binding proteins (ULBPs); these ligands are up-regulated by stress conditions and pathological state such as viral infection and tumor transformation. Functions as a docking site for PI3-kinase PIK3R1 and GRB2. Interaction of ULBPs with KLRK1-HCST triggers calcium mobilization and activation of the PIK3R1, MAP2K/ERK, and JAK2/STAT5 signaling pathways. Both PIK3R1 and GRB2 are required for full KLRK1-HCST-mediated activation and ultimate killing of target cells. In NK cells, KLRK1-HCST signaling directly induces cytotoxicity and enhances cytokine production initiated via DAP12/TYROBP-associated receptors. In T-cells, it provides primarily costimulation for TCR-induced signals. KLRK1-HCST receptor plays a role in immune surveillance against tumors and is required for cytolysis of tumors cells; indeed, melanoma cells that do not express KLRK1 ligands escape from immune surveillance mediated by NK cells. This Mus musculus (Mouse) protein is Hematopoietic cell signal transducer (Hcst).